The primary structure comprises 318 residues: MTTGAELQKYDPYRTFTREQWAKLRDDTPMTLRAEEIERMHSMLDRLDIKEVEEIYLPLSRLLSFYVSAARRLFESERRFLRIRDRKMPYIIGVAGSVAVGKSTTARVLQALLARWSPKPKVDLITTDGFLHSNAYLERAGLMDKKGFPESYNLGALLTFLSDIKAGRRDVRAPVYSHLTYDIVPNETIEIDQPDILIVEGLNVLQTGRLPADGKAVPFISDFFDFSVYIDADESTLQEWYAARFLKLRDTAFSDPRSYFHRYAGLSDEAAREKALSIWNKINRVNLRENVLPTRPRATLILKKGSDHVVERVSLRRL.

96 to 103 provides a ligand contact to ATP; it reads GSVAVGKS.

It belongs to the prokaryotic pantothenate kinase family.

The protein localises to the cytoplasm. It catalyses the reaction (R)-pantothenate + ATP = (R)-4'-phosphopantothenate + ADP + H(+). It participates in cofactor biosynthesis; coenzyme A biosynthesis; CoA from (R)-pantothenate: step 1/5. The protein is Pantothenate kinase of Afipia carboxidovorans (strain ATCC 49405 / DSM 1227 / KCTC 32145 / OM5) (Oligotropha carboxidovorans).